The sequence spans 676 residues: Palmitoyl-CoA ligase FUM16 (676 aa).

245-256 (IMYTSGSTGLPN) serves as a coordination point for AMP. Positions 552–655 (KLESIYRTSQ…SGLVTPTMKL (104 aa)) are AMP-binding.

The protein belongs to the ATP-dependent AMP-binding enzyme family.

It is found in the endoplasmic reticulum. It functions in the pathway mycotoxin biosynthesis. Its function is as follows. Palmitoyl-CoA ligase; part of the gene cluster that mediates the biosynthesis of fumonisins B1 (FB1), B2 (FB2), B3 (FB3), and B4 (FB4), which are carcinogenic mycotoxins. Plays a role in the synthesis of ceramide and is involved in self-protection from fumonisin B1 toxicity. The biosynthesis starts with the FUM1-catalyzed carbon chain assembly from one molecule of acetyl-CoA, eight molecules of malonyl-CoA, and two molecules of methionine (in S-adenosyl form). The C18 polyketide chain is released from the enzyme by a nucleophilic attack of a carbanion, which is derived from R-carbon of alanine by decarboxylation, on the carbonyl carbon of polyketide acyl chain. This step is catalyzed by the pyridoxal 5'-phosphate-dependent aminoacyl transferase FUM8. The resultant 3-keto intermediate is then stereospecifically reduced to a 3-hydroxyl product by reductase FUM13. Subsequent oxidations at C-10 by the cytochrome P450 monooxygenase FUM2, C-14 and C-15 by FUM6, FUM12 or FUM15, tricarballylic esterification of the hydroxyl groups on C-14 and C-15 by acyltransferase FUM14, and C-5 hydroxylation by 2-keto-glutarate-dependent dioxygenase FUM3 furnish the biosynthesis of fumonisins. The tricarballylic moieties are most likely derived from the citric acid cycle, and their addition to the carbon backbone may involve FUM7, FUM10, FUM11 and FUM14. The protein is Palmitoyl-CoA ligase FUM16 of Gibberella moniliformis (strain M3125 / FGSC 7600) (Maize ear and stalk rot fungus).